A 363-amino-acid polypeptide reads, in one-letter code: tRNA/tmRNA (uracil-C(5))-methyltransferase (363 aa).

Gln187, Tyr215, Asn220, Glu236, and Asp296 together coordinate S-adenosyl-L-methionine. Cys321 serves as the catalytic Nucleophile. The Proton acceptor role is filled by Glu355.

The protein belongs to the class I-like SAM-binding methyltransferase superfamily. RNA M5U methyltransferase family. TrmA subfamily.

The enzyme catalyses uridine(54) in tRNA + S-adenosyl-L-methionine = 5-methyluridine(54) in tRNA + S-adenosyl-L-homocysteine + H(+). It catalyses the reaction uridine(341) in tmRNA + S-adenosyl-L-methionine = 5-methyluridine(341) in tmRNA + S-adenosyl-L-homocysteine + H(+). In terms of biological role, dual-specificity methyltransferase that catalyzes the formation of 5-methyluridine at position 54 (m5U54) in all tRNAs, and that of position 341 (m5U341) in tmRNA (transfer-mRNA). This chain is tRNA/tmRNA (uracil-C(5))-methyltransferase, found in Haemophilus influenzae (strain 86-028NP).